We begin with the raw amino-acid sequence, 789 residues long: Transducer protein Htr6 (789 aa).

Transmembrane regions (helical) follow at residues 29-49 (FAVA…FAFQ) and 294-314 (TVTV…IALG). 2 consecutive HAMP domains span residues 315 to 367 (RHTV…DRIQ) and 409 to 462 (ERLQ…ATIA). One can recognise a Methyl-accepting transducer domain in the interval 481–717 (GAEEIETTSQ…SVVRRVDDVA (237 aa)). Residues 763 to 789 (NQFETRADADEPDADTTVDASADDTGD) form a disordered region. Over residues 772–789 (DEPDADTTVDASADDTGD) the composition is skewed to acidic residues.

The protein belongs to the methyl-accepting chemotaxis (MCP) protein family. In terms of processing, methylated by CheR.

It is found in the cell membrane. Functionally, potentially involved in chemo- or phototactic signal transduction. The protein is Transducer protein Htr6 (htr6) of Halobacterium salinarum (strain ATCC 29341 / DSM 671 / R1).